Reading from the N-terminus, the 91-residue chain is Large ribosomal subunit protein uL23c (91 aa).

It belongs to the universal ribosomal protein uL23 family. In terms of assembly, part of the 50S ribosomal subunit.

Its subcellular location is the plastid. The protein resides in the chloroplast. Functionally, binds to 23S rRNA. The protein is Large ribosomal subunit protein uL23c (rpl23) of Marchantia polymorpha (Common liverwort).